The following is a 396-amino-acid chain: Digeranylgeranylglycerophospholipid reductase 2 (396 aa).

Positions 13, 32, 43, 44, 46, 92, 116, 278, 290, and 291 each coordinate FAD.

It belongs to the geranylgeranyl reductase family. DGGGPL reductase subfamily. The cofactor is FAD.

It catalyses the reaction a 2,3-bis-O-phytanyl-sn-glycerol 1-phospholipid + 8 A = a 2,3-bis-O-(geranylgeranyl)-sn-glycerol 1-phospholipid + 8 AH2. The enzyme catalyses 2,3-bis-O-(phytanyl)-sn-glycerol 1-phosphate + 8 A = 2,3-bis-O-(geranylgeranyl)-sn-glycerol 1-phosphate + 8 AH2. It carries out the reaction CDP-2,3-bis-O-(geranylgeranyl)-sn-glycerol + 8 AH2 = CDP-2,3-bis-O-(phytanyl)-sn-glycerol + 8 A. The catalysed reaction is archaetidylserine + 8 AH2 = 2,3-bis-O-phytanyl-sn-glycero-3-phospho-L-serine + 8 A. It participates in membrane lipid metabolism; glycerophospholipid metabolism. Functionally, is involved in the reduction of 2,3-digeranylgeranylglycerophospholipids (unsaturated archaeols) into 2,3-diphytanylglycerophospholipids (saturated archaeols) in the biosynthesis of archaeal membrane lipids. Catalyzes the formation of archaetidic acid (2,3-di-O-phytanyl-sn-glyceryl phosphate) from 2,3-di-O-geranylgeranylglyceryl phosphate (DGGGP) via the hydrogenation of each double bond of the isoprenoid chains. Is also probably able to reduce double bonds of geranyl groups in CDP-2,3-bis-O-(geranylgeranyl)-sn-glycerol and archaetidylserine, thus acting at various stages in the biosynthesis of archaeal membrane lipids. This Methanopyrus kandleri (strain AV19 / DSM 6324 / JCM 9639 / NBRC 100938) protein is Digeranylgeranylglycerophospholipid reductase 2.